A 355-amino-acid chain; its full sequence is S-adenosylmethionine:tRNA ribosyltransferase-isomerase (355 aa).

Belongs to the QueA family. As to quaternary structure, monomer.

The protein localises to the cytoplasm. The enzyme catalyses 7-aminomethyl-7-carbaguanosine(34) in tRNA + S-adenosyl-L-methionine = epoxyqueuosine(34) in tRNA + adenine + L-methionine + 2 H(+). It participates in tRNA modification; tRNA-queuosine biosynthesis. Transfers and isomerizes the ribose moiety from AdoMet to the 7-aminomethyl group of 7-deazaguanine (preQ1-tRNA) to give epoxyqueuosine (oQ-tRNA). This is S-adenosylmethionine:tRNA ribosyltransferase-isomerase from Burkholderia ambifaria (strain MC40-6).